Reading from the N-terminus, the 145-residue chain is D-aminoacyl-tRNA deacylase (145 aa).

The short motif at 137-138 (GP) is the Gly-cisPro motif, important for rejection of L-amino acids element.

It belongs to the DTD family. As to quaternary structure, homodimer.

It localises to the cytoplasm. The catalysed reaction is glycyl-tRNA(Ala) + H2O = tRNA(Ala) + glycine + H(+). The enzyme catalyses a D-aminoacyl-tRNA + H2O = a tRNA + a D-alpha-amino acid + H(+). In terms of biological role, an aminoacyl-tRNA editing enzyme that deacylates mischarged D-aminoacyl-tRNAs. Also deacylates mischarged glycyl-tRNA(Ala), protecting cells against glycine mischarging by AlaRS. Acts via tRNA-based rather than protein-based catalysis; rejects L-amino acids rather than detecting D-amino acids in the active site. By recycling D-aminoacyl-tRNA to D-amino acids and free tRNA molecules, this enzyme counteracts the toxicity associated with the formation of D-aminoacyl-tRNA entities in vivo and helps enforce protein L-homochirality. This is D-aminoacyl-tRNA deacylase from Shewanella baltica (strain OS195).